Consider the following 40-residue polypeptide: uncharacterized protein (40 aa).

This is an uncharacterized protein from Treponema pallidum (strain Nichols).